Reading from the N-terminus, the 615-residue chain is DNA mismatch repair protein MutL (615 aa).

Residues 363–397 are disordered; the sequence is FAEPAAREPVAPRYTPAPASGSRPAAPWPNAQPGY. Positions 364 to 391 are enriched in low complexity; sequence AEPAAREPVAPRYTPAPASGSRPAAPWP.

This sequence belongs to the DNA mismatch repair MutL/HexB family.

Its function is as follows. This protein is involved in the repair of mismatches in DNA. It is required for dam-dependent methyl-directed DNA mismatch repair. May act as a 'molecular matchmaker', a protein that promotes the formation of a stable complex between two or more DNA-binding proteins in an ATP-dependent manner without itself being part of a final effector complex. This chain is DNA mismatch repair protein MutL, found in Shigella boydii serotype 4 (strain Sb227).